A 518-amino-acid polypeptide reads, in one-letter code: UPF0288 protein Mbar_A0706 (518 aa).

It belongs to the UPF0288 family.

This Methanosarcina barkeri (strain Fusaro / DSM 804) protein is UPF0288 protein Mbar_A0706.